A 339-amino-acid chain; its full sequence is Anthranilate phosphoribosyltransferase (339 aa).

Residues G79, 82–83 (GD), S87, 89–92 (NIST), 107–115 (KHGNRSVSS), and S119 each bind 5-phospho-alpha-D-ribose 1-diphosphate. G79 contributes to the anthranilate binding site. S91 provides a ligand contact to Mg(2+). N110 lines the anthranilate pocket. Residue R165 participates in anthranilate binding. The Mg(2+) site is built by D224 and E225.

It belongs to the anthranilate phosphoribosyltransferase family. As to quaternary structure, homodimer. It depends on Mg(2+) as a cofactor.

It carries out the reaction N-(5-phospho-beta-D-ribosyl)anthranilate + diphosphate = 5-phospho-alpha-D-ribose 1-diphosphate + anthranilate. It functions in the pathway amino-acid biosynthesis; L-tryptophan biosynthesis; L-tryptophan from chorismate: step 2/5. Its function is as follows. Catalyzes the transfer of the phosphoribosyl group of 5-phosphorylribose-1-pyrophosphate (PRPP) to anthranilate to yield N-(5'-phosphoribosyl)-anthranilate (PRA). This is Anthranilate phosphoribosyltransferase from Exiguobacterium sibiricum (strain DSM 17290 / CCUG 55495 / CIP 109462 / JCM 13490 / 255-15).